Here is a 380-residue protein sequence, read N- to C-terminus: Cytochrome b (380 aa).

4 helical membrane-spanning segments follow: residues 33-53 (FGSL…FLAM), 77-98 (WLIR…FIHV), 113-133 (WNIG…GYVL), and 178-198 (FFAF…VHLL). 2 residues coordinate heme b: His83 and His97. Heme b contacts are provided by His182 and His196. His201 lines the a ubiquinone pocket. Transmembrane regions (helical) follow at residues 226 to 246 (IKDL…VLFF), 288 to 308 (LGGV…PLLN), 320 to 340 (ITQV…XXXX), and 347 to 367 (XXXX…IFMP).

The protein belongs to the cytochrome b family. As to quaternary structure, the cytochrome bc1 complex contains 11 subunits: 3 respiratory subunits (MT-CYB, CYC1 and UQCRFS1), 2 core proteins (UQCRC1 and UQCRC2) and 6 low-molecular weight proteins (UQCRH/QCR6, UQCRB/QCR7, UQCRQ/QCR8, UQCR10/QCR9, UQCR11/QCR10 and a cleavage product of UQCRFS1). This cytochrome bc1 complex then forms a dimer. It depends on heme b as a cofactor.

It is found in the mitochondrion inner membrane. Component of the ubiquinol-cytochrome c reductase complex (complex III or cytochrome b-c1 complex) that is part of the mitochondrial respiratory chain. The b-c1 complex mediates electron transfer from ubiquinol to cytochrome c. Contributes to the generation of a proton gradient across the mitochondrial membrane that is then used for ATP synthesis. In Rhipidomys leucodactylus (White-footed climbing mouse), this protein is Cytochrome b (MT-CYB).